The chain runs to 426 residues: Tyrosine--tRNA ligase (426 aa).

Tyrosine 35 contributes to the L-tyrosine binding site. The short motif at 40–49 (PTADSLHIGH) is the 'HIGH' region element. Residues tyrosine 172 and glutamine 176 each coordinate L-tyrosine. The 'KMSKS' region signature appears at 232–236 (KLGKS). An ATP-binding site is contributed by lysine 235. One can recognise an S4 RNA-binding domain in the interval 357–414 (ENIKDILVNSKLSKSKNNAKSVILSSSIRINNKKQKSIDFMFKKEDKLFNLFTLIKKG).

This sequence belongs to the class-I aminoacyl-tRNA synthetase family. TyrS type 1 subfamily. As to quaternary structure, homodimer.

It localises to the cytoplasm. It catalyses the reaction tRNA(Tyr) + L-tyrosine + ATP = L-tyrosyl-tRNA(Tyr) + AMP + diphosphate + H(+). Functionally, catalyzes the attachment of tyrosine to tRNA(Tyr) in a two-step reaction: tyrosine is first activated by ATP to form Tyr-AMP and then transferred to the acceptor end of tRNA(Tyr). This chain is Tyrosine--tRNA ligase, found in Wigglesworthia glossinidia brevipalpis.